The primary structure comprises 244 residues: uncharacterized protein (244 aa).

In terms of domain architecture, HTH gntR-type spans 7–74 (VKEKDQVVAH…YHRGAFIERF (68 aa)). The segment at residues 34–53 (RNEIAHGLGVSRVPIQEALV) is a DNA-binding region (H-T-H motif).

This is an uncharacterized protein from Mycobacterium tuberculosis (strain CDC 1551 / Oshkosh).